The chain runs to 283 residues: 5'-nucleotidase SurE 2 (283 aa).

4 residues coordinate a divalent metal cation: Asp-19, Asp-20, Ser-52, and Asn-110.

It belongs to the SurE nucleotidase family. It depends on a divalent metal cation as a cofactor.

It is found in the cytoplasm. It carries out the reaction a ribonucleoside 5'-phosphate + H2O = a ribonucleoside + phosphate. In terms of biological role, nucleotidase that shows phosphatase activity on nucleoside 5'-monophosphates. This chain is 5'-nucleotidase SurE 2, found in Chlamydia caviae (strain ATCC VR-813 / DSM 19441 / 03DC25 / GPIC) (Chlamydophila caviae).